The following is a 308-amino-acid chain: Cyclopropane mycolic acid synthase 2 (308 aa).

S-adenosyl-L-methionine contacts are provided by residues 44-45 (YS), 79-87 (LLDIGCGWG), 105-110 (TLSANQ), and 137-138 (WE). Cys290 is an active-site residue.

The protein belongs to the CFA/CMAS family. Homodimer.

It localises to the cytoplasm. It catalyses the reaction a 1-acyl-2-(9Z)-enoyl-sn-glycero-3-phospholipid + S-adenosyl-L-methionine = a 1-acyl-2-(9-cyclopronane)-acyl-sn-glycero-3-phospholipid + S-adenosyl-L-homocysteine + H(+). It participates in lipid metabolism; mycolic acid biosynthesis. Catalyzes the formation of trans cyclopropanated ketomycolate or methoxymycolate through the conversion of a double bond to a cyclopropane ring at the proximal position of an oxygenated mycolic acid via the transfer of a methylene group from S-adenosyl-L-methionine. In the absence of MmaA2, CmaA2 has a non-specific cis-cyclopropanating activity and is able to catalyze the conversion of a double bond to a cis cyclopropane ring at the distal position of an alpha mycolic acid. Cyclopropanated mycolic acids are key factors participating in cell envelope permeability, host immunomodulation and persistence. The protein is Cyclopropane mycolic acid synthase 2 (cmaA2) of Mycobacterium leprae (strain TN).